The chain runs to 78 residues: Small ribosomal subunit protein uS17 (78 aa).

This sequence belongs to the universal ribosomal protein uS17 family. Part of the 30S ribosomal subunit.

Its function is as follows. One of the primary rRNA binding proteins, it binds specifically to the 5'-end of 16S ribosomal RNA. This Sinorhizobium medicae (strain WSM419) (Ensifer medicae) protein is Small ribosomal subunit protein uS17.